Consider the following 466-residue polypeptide: Purple acid phosphatase 6 (466 aa).

An N-terminal signal peptide occupies residues 1-20 (MKNLVIFAFLFLSITTVING). Asn-88 is a glycosylation site (N-linked (GlcNAc...) asparagine). Residue Asp-164 participates in Fe cation binding. Residue Asn-172 is glycosylated (N-linked (GlcNAc...) asparagine). Asp-192 and Tyr-195 together coordinate Fe cation. Position 192 (Asp-192) interacts with Zn(2+). Residues Asn-229 and His-314 each contribute to the Zn(2+) site. Position 229 (Asn-229) interacts with substrate. His-324 functions as the Proton donor in the catalytic mechanism. His-351 lines the Zn(2+) pocket. 351 to 353 (HVH) serves as a coordination point for substrate. Residue His-353 participates in Fe cation binding. N-linked (GlcNAc...) asparagine glycans are attached at residues Asn-367 and Asn-424.

It belongs to the metallophosphoesterase superfamily. Purple acid phosphatase family. As to quaternary structure, homodimer. Fe cation is required as a cofactor. Requires Zn(2+) as cofactor. In terms of tissue distribution, specifically expressed in flowers.

The protein localises to the secreted. The enzyme catalyses a phosphate monoester + H2O = an alcohol + phosphate. This is Purple acid phosphatase 6 (PAP6) from Arabidopsis thaliana (Mouse-ear cress).